We begin with the raw amino-acid sequence, 201 residues long: Adenylyl-sulfate kinase (201 aa).

35–42 (GLSGSGKS) contributes to the ATP binding site. Serine 109 serves as the catalytic Phosphoserine intermediate.

The protein belongs to the APS kinase family.

The enzyme catalyses adenosine 5'-phosphosulfate + ATP = 3'-phosphoadenylyl sulfate + ADP + H(+). It participates in sulfur metabolism; hydrogen sulfide biosynthesis; sulfite from sulfate: step 2/3. Functionally, catalyzes the synthesis of activated sulfate. In Escherichia coli O139:H28 (strain E24377A / ETEC), this protein is Adenylyl-sulfate kinase.